The primary structure comprises 333 residues: 5-formaminoimidazole-4-carboxamide-1-(beta)-D-ribofuranosyl 5'-monophosphate synthetase (333 aa).

Residues His10 and Ser70 each coordinate 5-amino-1-(5-phospho-beta-D-ribosyl)imidazole-4-carboxamide. One can recognise an ATP-grasp domain in the interval 91–324 (KEVLKWESDR…IAREIKIAIE (234 aa)). ATP is bound by residues 121–181 (PDDI…VPIY) and Glu203. Asn231 serves as a coordination point for 5-amino-1-(5-phospho-beta-D-ribosyl)imidazole-4-carboxamide. Residues Glu269 and Glu282 each coordinate Mg(2+).

The protein belongs to the phosphohexose mutase family. Mg(2+) serves as cofactor. It depends on Mn(2+) as a cofactor.

It carries out the reaction 5-amino-1-(5-phospho-beta-D-ribosyl)imidazole-4-carboxamide + formate + ATP = 5-formamido-1-(5-phospho-D-ribosyl)imidazole-4-carboxamide + ADP + phosphate. It functions in the pathway purine metabolism; IMP biosynthesis via de novo pathway; 5-formamido-1-(5-phospho-D-ribosyl)imidazole-4-carboxamide from 5-amino-1-(5-phospho-D-ribosyl)imidazole-4-carboxamide (formate route): step 1/1. Its function is as follows. Catalyzes the ATP- and formate-dependent formylation of 5-aminoimidazole-4-carboxamide-1-beta-d-ribofuranosyl 5'-monophosphate (AICAR) to 5-formaminoimidazole-4-carboxamide-1-beta-d-ribofuranosyl 5'-monophosphate (FAICAR) in the absence of folates. The polypeptide is 5-formaminoimidazole-4-carboxamide-1-(beta)-D-ribofuranosyl 5'-monophosphate synthetase (Pyrococcus horikoshii (strain ATCC 700860 / DSM 12428 / JCM 9974 / NBRC 100139 / OT-3)).